The primary structure comprises 190 residues: Riboflavin transporter FmnP (190 aa).

Over 1-5 the chain is Extracellular; it reads MKVKK. A helical transmembrane segment spans residues 6-26; the sequence is LVVVSMLSSIAFVLMLLNFPF. Topologically, residues 27-39 are cytoplasmic; the sequence is PGLPDYLKIDFSD. The chain crosses the membrane as a helical span at residues 40–60; the sequence is VPAIIAILIYGPLAGIAVEAI. Over 61–76 the chain is Extracellular; it reads KNVLQYIIQGSMAGVP. Residues 77–97 form a helical membrane-spanning segment; the sequence is VGQVANFIAGTLFILPTAFLF. Residues 98 to 109 are Cytoplasmic-facing; the sequence is KKLNSAKGLAVS. The chain crosses the membrane as a helical span at residues 110–130; that stretch reads LLLGTAAMTILMSILNYVLIL. Residues 131–154 are Extracellular-facing; it reads PAYTWFLHSPALSDSALKTAVVAG. Residues 155 to 175 traverse the membrane as a helical segment; the sequence is ILPFNMIKGIVITVVFSLIFI. The Cytoplasmic segment spans residues 176–190; it reads KLKPWIEQQRSAHIH.

It belongs to the prokaryotic riboflavin transporter (P-RFT) (TC 2.A.87) family. Forms a stable energy-coupling factor (ECF) transporter complex composed of a membrane-embedded substrate-binding protein (S component), 2 ATP-binding proteins (A component) and 2 transmembrane proteins (T component). May be able to interact with more than 1 S component at a time.

The protein resides in the cell membrane. With respect to regulation, inhibited by excess of riboflavin or FMN. Also inhibited by protonophores such as CCCP and FCCP or in the absence of glucose. Mediates uptake of riboflavin and roseoflavin, a toxic riboflavin analog; may also transport FMN. Probably a riboflavin-binding protein that interacts with the energy-coupling factor (ECF) ABC-transporter complex. Unlike classic ABC transporters this ECF transporter provides the energy necessary to transport a number of different substrates. The substrates themselves are bound by transmembrane, not extracytoplasmic soluble proteins. The chain is Riboflavin transporter FmnP (fmnP) from Bacillus subtilis (strain 168).